Here is a 384-residue protein sequence, read N- to C-terminus: Glycerol 3-phosphate oxidase (384 aa).

Positions 1-17 (MQTIDVLIVGGGVIGTS) are cleaved as a signal peptide. I14 contacts FAD. Residue C18 is the site of N-palmitoyl cysteine attachment. A lipid anchor (S-diacylglycerol cysteine) is attached at C18. FAD contacts are provided by residues E33, 42-43 (TS), and 47-49 (SGV). S47 and H51 together coordinate sn-glycerol 3-phosphate. Residue H51 is the Proton acceptor of the active site. V177 provides a ligand contact to FAD. Sn-glycerol 3-phosphate is bound by residues K258 and R320. 346-347 (MK) contributes to the FAD binding site. S348 is a sn-glycerol 3-phosphate binding site. An FAD-binding site is contributed by T352.

In terms of assembly, monomer. It depends on FAD as a cofactor.

It localises to the cytoplasm. The protein resides in the cell membrane. It catalyses the reaction sn-glycerol 3-phosphate + O2 = dihydroxyacetone phosphate + H2O2. It functions in the pathway polyol metabolism; glycerol degradation via glycerol kinase pathway; glycerone phosphate from sn-glycerol 3-phosphate (aerobic route): step 1/1. Functionally, catalyzes the oxidation of glycerol 3-phosphate to dihydroxyacetone phosphate (DHAP), with a reduction of O2 to H2O2. The formation of hydrogen peroxide by this enzyme is crucial for cytotoxic effects on host cells. Does not show any dehydrogenase activity with NAD(+). The chain is Glycerol 3-phosphate oxidase from Mycoplasma genitalium (strain ATCC 33530 / DSM 19775 / NCTC 10195 / G37) (Mycoplasmoides genitalium).